Here is a 703-residue protein sequence, read N- to C-terminus: MASQSAHLVKTHQLWELLRHRTKTGSYELDGDSLHIADVVATAQQTSTPRLSEDPKVIKGLQDSVDVLFDHLAKGWYVYGVNTGFGGSADSRTTEVIELQKALMQLTQTGILTTPSDGSAIPGHSTPFEWVRAAMVVRCNASLRGHSAVSLPIIKAIINLLVHGLTPVVPLRGTVSASGDLMPLAYVTGSIEGNPDTLLEKNGKVLPSPKALQEAGLAPVFLGPKEGLGLINGTASSAGLGALVVAQAHSLAFLTQVLTGGAVEALRGSSESFHPFIARARPHPGQIECARNIAYFLRGSHLSRDVLAPKDRRREDLAQDRYSLRSAPQWIGPQLEDLLLADQQISIELNSSCDNPLVDSETNDIYYGCNFQAAAVTSAMEKVRLAMQMFGRMLFAQSTEMIDVHLSGGLPANLAADNPSISFTMKGVDINMAAYMAELSYLANPMSSHVQAAEMHNQSVNSMAFASARISHDAIDVLTKMCACSVFTVCQALDLRALHMAFIADATKALASTIELKFSAKVEAGQLNSLQMLIQAHVTRAWGLTGKLDLHARCESLIDSALPIVLCHVAGDVADIIEWKTQAIEVVWNVWTNTFASFSAAPHTSQLLGAGSRLLYNFVRKTLGVPFHEGFVEHPTADSQTLHSRPKKTIGGWITIIHESIRRGSIYNELLALAEGLLSTKRTDGANGANCTLCHEMKGEIHV.

Catalysis depends on Y79, which acts as the Proton donor/acceptor. The 5-imidazolinone (Ala-Gly) cross-link spans 177-179; it reads ASG. Residue S178 is modified to 2,3-didehydroalanine (Ser).

Belongs to the PAL/histidase family. In terms of processing, contains an active site 4-methylidene-imidazol-5-one (MIO), which is formed autocatalytically by cyclization and dehydration of residues Ala-Ser-Gly.

It catalyses the reaction L-phenylalanine = L-beta-phenylalanine. Its pathway is mycotoxin biosynthesis. In terms of biological role, phenylalanine aminomutase; part of the gene cluster that mediates the biosynthesis of the mycotoxin cyclochlorotine, a hepatotoxic and carcinogenic cyclic chlorinated pentapeptide. Within the pathway, cctP1 provides the uncommon building block beta-Phe from Phe. The NRPS cctN initially catalyzes the condensation of L-serine (Ser), Pro, L-2-aminobutyrate (2Abu), Ser, and beta-Phe in this order to produce isocyclotine. After the dichlorination of Pro2 catalyzed by cctP2 to produce isocyclochlorotine, the cctO-mediated transacylation of isocyclochlorotine can furnish cyclochlorotine. The subsequent hydroxylation of cyclochlorotine by cctR yields hydroxycyclochlorotine as the final product. CctP1 probably acts as a phenylalanine aminomutase and provides the uncommon building block beta-Phe. Furthermore, 2Abu can be synthesized from threonine by one of the threonine dehydratases and transaminases localized outside of the cluster. The functions of the remaining proteins encoded by the cluster, cctM and cctT, have not been identified yet. The polypeptide is Phenylalanine aminomutase (L-beta-phenylalanine forming) (Talaromyces islandicus (Penicillium islandicum)).